The following is a 431-amino-acid chain: Glucose-1-phosphate adenylyltransferase (431 aa).

K39 serves as a coordination point for beta-D-fructose 1,6-bisphosphate. Residues R40, H46, and R52 each contribute to the AMP site. Y114 contributes to the alpha-D-glucose 1-phosphate binding site. R130 is an AMP binding site. Alpha-D-glucose 1-phosphate-binding positions include G179, 194 to 195 (EK), and S212. Residue R386 coordinates AMP. Beta-D-fructose 1,6-bisphosphate is bound by residues 419–423 (REMLR) and 429–431 (QER).

The protein belongs to the bacterial/plant glucose-1-phosphate adenylyltransferase family. As to quaternary structure, homotetramer.

The catalysed reaction is alpha-D-glucose 1-phosphate + ATP + H(+) = ADP-alpha-D-glucose + diphosphate. It participates in glycan biosynthesis; glycogen biosynthesis. With respect to regulation, allosterically activated by fructose-1,6-bisphosphate (F16BP) and inhibited by AMP. Its function is as follows. Involved in the biosynthesis of ADP-glucose, a building block required for the elongation reactions to produce glycogen. Catalyzes the reaction between ATP and alpha-D-glucose 1-phosphate (G1P) to produce pyrophosphate and ADP-Glc. This chain is Glucose-1-phosphate adenylyltransferase, found in Enterobacter sp. (strain 638).